The following is a 170-amino-acid chain: Photosystem II extrinsic protein V (170 aa).

Residues 1 to 34 (MNKILGIDPLKKFIFGISAFVLLFWQLNVGAANA) form the signal peptide. Cys70, Cys73, His74, and His125 together coordinate heme c.

The protein belongs to the cytochrome c family. PsbV subfamily. PSII is composed of 1 copy each of membrane proteins PsbA, PsbB, PsbC, PsbD, PsbE, PsbF, PsbH, PsbI, PsbJ, PsbK, PsbL, PsbM, PsbT, PsbX, PsbY, PsbZ, Psb30/Ycf12, peripheral proteins PsbO, CyanoQ (PsbQ), PsbU, PsbV and a large number of cofactors. It forms dimeric complexes. Requires heme c as cofactor.

It is found in the cellular thylakoid membrane. Its function is as follows. One of the extrinsic, lumenal subunits of photosystem II (PSII). PSII is a light-driven water plastoquinone oxidoreductase, using light energy to abstract electrons from H(2)O, generating a proton gradient subsequently used for ATP formation. The extrinsic proteins stabilize the structure of photosystem II oxygen-evolving complex (OEC), the ion environment of oxygen evolution and protect the OEC against heat-induced inactivation. Low-potential cytochrome c that plays a role in the OEC of PSII. This is Photosystem II extrinsic protein V from Picosynechococcus sp. (strain ATCC 27264 / PCC 7002 / PR-6) (Agmenellum quadruplicatum).